The following is a 345-amino-acid chain: Adenine deaminase (345 aa).

Zn(2+)-binding residues include His-24, His-26, and His-204. Glu-207 (proton donor) is an active-site residue. Asp-285 serves as a coordination point for Zn(2+). Asp-286 serves as a coordination point for substrate.

Belongs to the metallo-dependent hydrolases superfamily. Adenosine and AMP deaminases family. Adenine deaminase type 2 subfamily. The cofactor is Zn(2+).

The enzyme catalyses adenine + H2O + H(+) = hypoxanthine + NH4(+). Catalyzes the hydrolytic deamination of adenine to hypoxanthine. Plays an important role in the purine salvage pathway and in nitrogen catabolism. This Albidiferax ferrireducens (strain ATCC BAA-621 / DSM 15236 / T118) (Rhodoferax ferrireducens) protein is Adenine deaminase.